Consider the following 513-residue polypeptide: Lysine--tRNA ligase (513 aa).

Glutamate 422 and glutamate 429 together coordinate Mg(2+).

This sequence belongs to the class-II aminoacyl-tRNA synthetase family. In terms of assembly, homodimer. Requires Mg(2+) as cofactor.

Its subcellular location is the cytoplasm. It carries out the reaction tRNA(Lys) + L-lysine + ATP = L-lysyl-tRNA(Lys) + AMP + diphosphate. The sequence is that of Lysine--tRNA ligase from Tolumonas auensis (strain DSM 9187 / NBRC 110442 / TA 4).